A 717-amino-acid polypeptide reads, in one-letter code: Ubiquitin carboxyl-terminal hydrolase 11 (717 aa).

The interval 231 to 268 is disordered; that stretch reads ATAPPVHSLEVSSQIRDSSQDSSSSLSKVEKPKEEEGK. Over residues 242–257 the composition is skewed to low complexity; the sequence is SSQIRDSSQDSSSSLS. The span at 258–268 shows a compositional bias: basic and acidic residues; that stretch reads KVEKPKEEEGK. In terms of domain architecture, USP spans 298 to 707; sequence TGLQNPCNTC…EVYVLFYERM (410 aa). Cys307 serves as the catalytic Nucleophile. Residues 531 to 577 form a disordered region; sequence KKEEITSQKKKSTIFGFHSRSRSKSPHHHHHHHHSSDDSTKNAKKRN. A compositionally biased stretch (basic residues) spans 549–564; sequence SRSRSKSPHHHHHHHH. The Proton acceptor role is filled by His649.

This sequence belongs to the peptidase C19 family.

The catalysed reaction is Thiol-dependent hydrolysis of ester, thioester, amide, peptide and isopeptide bonds formed by the C-terminal Gly of ubiquitin (a 76-residue protein attached to proteins as an intracellular targeting signal).. This is Ubiquitin carboxyl-terminal hydrolase 11 (UBP11) from Saccharomyces cerevisiae (strain ATCC 204508 / S288c) (Baker's yeast).